The following is a 1226-amino-acid chain: DNA-directed RNA polymerase subunit beta (1226 aa).

The protein belongs to the RNA polymerase beta chain family. As to quaternary structure, the RNAP catalytic core consists of 2 alpha, 1 beta, 1 beta' and 1 omega subunit. When a sigma factor is associated with the core the holoenzyme is formed, which can initiate transcription.

The enzyme catalyses RNA(n) + a ribonucleoside 5'-triphosphate = RNA(n+1) + diphosphate. Its function is as follows. DNA-dependent RNA polymerase catalyzes the transcription of DNA into RNA using the four ribonucleoside triphosphates as substrates. This chain is DNA-directed RNA polymerase subunit beta, found in Leptospira borgpetersenii serovar Hardjo-bovis (strain JB197).